Consider the following 405-residue polypeptide: Nodal homolog 2-A (405 aa).

The first 18 residues, 1 to 18, serve as a signal peptide directing secretion; sequence MASLGVILFFVIASLIHG. A propeptide spanning residues 19–282 is cleaved from the precursor; that stretch reads KPIHSERKAA…RVTDTRRPRR (264 aa). N-linked (GlcNAc...) asparagine glycosylation is found at Asn71, Asn172, and Asn343. 3 disulfides stabilise this stretch: Cys305–Cys371, Cys334–Cys402, and Cys338–Cys404.

It belongs to the TGF-beta family. Homodimer; disulfide-linked. Forms heterodimers with the TGF-beta family member derriere. Interacts with tsku; enhances nodal2 activity. As to expression, first localized to the vegetal region of the blastula. Just prior to gastrulation (stage 10), this expression disappears and instead becomes localized to the dorsal marginal zone, with enrichment in the organizer.

The protein localises to the secreted. Cooperation and regulatory loops of multiple nodals are essential for mesendoderm patterning in early embryos. Essential for mesoderm formation and axial patterning during embryonic development. Activates the activin-like signaling pathway to induce dorsal and ventral mesoderm in animal cap ectoderm. In addition, also dorsalizes ventral marginal zone (VMZ) tissues during gastrulation. Induces muscle actin. Appears to act as both a short-range and long-range morphogen. The unprocessed protein inhibits bmp- and wnt-signaling. The polypeptide is Nodal homolog 2-A (nodal2-a) (Xenopus laevis (African clawed frog)).